The following is a 366-amino-acid chain: tRNA N6-adenosine threonylcarbamoyltransferase (366 aa).

A divalent metal cation contacts are provided by His-130, His-134, and Tyr-151. Residues 151 to 155 (YVSGG), Asp-183, Gly-198, Glu-202, and Asn-297 contribute to the substrate site. Asp-325 serves as a coordination point for a divalent metal cation.

The protein belongs to the KAE1 / TsaD family. Component of the EKC/KEOPS complex composed of at least BUD32, CGI121, GON7, KAE1 and PCC1; the whole complex dimerizes. A divalent metal cation serves as cofactor.

It is found in the cytoplasm. The protein resides in the nucleus. The enzyme catalyses L-threonylcarbamoyladenylate + adenosine(37) in tRNA = N(6)-L-threonylcarbamoyladenosine(37) in tRNA + AMP + H(+). Its function is as follows. Component of the EKC/KEOPS complex that is required for the formation of a threonylcarbamoyl group on adenosine at position 37 (t(6)A37) in tRNAs that read codons beginning with adenine. The complex is probably involved in the transfer of the threonylcarbamoyl moiety of threonylcarbamoyl-AMP (TC-AMP) to the N6 group of A37. KAE1 likely plays a direct catalytic role in this reaction, but requires other protein(s) of the complex to fulfill this activity. The EKC/KEOPS complex also promotes both telomere uncapping and telomere elongation. The complex is required for efficient recruitment of transcriptional coactivators. The sequence is that of tRNA N6-adenosine threonylcarbamoyltransferase from Cryptococcus neoformans var. neoformans serotype D (strain JEC21 / ATCC MYA-565) (Filobasidiella neoformans).